The sequence spans 283 residues: MRQYLNLCQRIIDQGHWVENERTGKRCLTVINADLTYDVANNQFPLITTRKSYWKAAIAEFLGYIRGYDNAADFRKLGTKTWDANANENQAWLNNPVRKGTDDMGRVYGVQGRRWRKPNGETVDQLRKIVNNLSKGIDDRGEILTFFNPGEIDLGCLRPCMHTHTFSLLGDTLYLTSYQRSCDVPLGLNFNQIQVFTFLALMAQITGKKAGQAYHKIINAHIYEDQFELMRDVQLKREPFPLPRLEINPDIKTLEDLETWVTMDDFKVIGYQCHEAIKYPFSV.

Arg-22 contacts dUMP. The Nucleophile role is filled by Cys-160. Residues 180–183, Asn-191, and 221–223 each bind dUMP; these read RSCD and HIY. Asp-183 is a (6R)-5,10-methylene-5,6,7,8-tetrahydrofolate binding site. Ser-282 contacts (6R)-5,10-methylene-5,6,7,8-tetrahydrofolate.

Belongs to the thymidylate synthase family. Bacterial-type ThyA subfamily. Homodimer.

The protein resides in the cytoplasm. The catalysed reaction is dUMP + (6R)-5,10-methylene-5,6,7,8-tetrahydrofolate = 7,8-dihydrofolate + dTMP. It functions in the pathway pyrimidine metabolism; dTTP biosynthesis. In terms of biological role, catalyzes the reductive methylation of 2'-deoxyuridine-5'-monophosphate (dUMP) to 2'-deoxythymidine-5'-monophosphate (dTMP) while utilizing 5,10-methylenetetrahydrofolate (mTHF) as the methyl donor and reductant in the reaction, yielding dihydrofolate (DHF) as a by-product. This enzymatic reaction provides an intracellular de novo source of dTMP, an essential precursor for DNA biosynthesis. The chain is Thymidylate synthase from Histophilus somni (strain 129Pt) (Haemophilus somnus).